Consider the following 194-residue polypeptide: HTH-type transcriptional regulator BetI (194 aa).

Residues 8 to 68 (EIRRAQLIDA…ATMRHVLRDL (61 aa)) form the HTH tetR-type domain. The H-T-H motif DNA-binding region spans 31–50 (TLASVAQRANISTGIVSHYF).

It participates in amine and polyamine biosynthesis; betaine biosynthesis via choline pathway [regulation]. Its function is as follows. Repressor involved in the biosynthesis of the osmoprotectant glycine betaine. It represses transcription of the choline transporter BetT and the genes of BetAB involved in the synthesis of glycine betaine. The sequence is that of HTH-type transcriptional regulator BetI from Burkholderia cenocepacia (strain ATCC BAA-245 / DSM 16553 / LMG 16656 / NCTC 13227 / J2315 / CF5610) (Burkholderia cepacia (strain J2315)).